The chain runs to 400 residues: Exodeoxyribonuclease 7 large subunit (400 aa).

Belongs to the XseA family. As to quaternary structure, heterooligomer composed of large and small subunits.

The protein resides in the cytoplasm. The enzyme catalyses Exonucleolytic cleavage in either 5'- to 3'- or 3'- to 5'-direction to yield nucleoside 5'-phosphates.. Functionally, bidirectionally degrades single-stranded DNA into large acid-insoluble oligonucleotides, which are then degraded further into small acid-soluble oligonucleotides. The sequence is that of Exodeoxyribonuclease 7 large subunit from Clostridium perfringens (strain 13 / Type A).